The following is a 407-amino-acid chain: Putative replication protein A (407 aa).

This sequence belongs to the ParA family.

The protein is Putative replication protein A of Sinorhizobium fredii (strain NBRC 101917 / NGR234).